We begin with the raw amino-acid sequence, 129 residues long: Small ribosomal subunit protein uS11 (129 aa).

This sequence belongs to the universal ribosomal protein uS11 family. Part of the 30S ribosomal subunit. Interacts with proteins S7 and S18. Binds to IF-3.

In terms of biological role, located on the platform of the 30S subunit, it bridges several disparate RNA helices of the 16S rRNA. Forms part of the Shine-Dalgarno cleft in the 70S ribosome. In Staphylococcus saprophyticus subsp. saprophyticus (strain ATCC 15305 / DSM 20229 / NCIMB 8711 / NCTC 7292 / S-41), this protein is Small ribosomal subunit protein uS11.